Consider the following 449-residue polypeptide: Phosphoglucosamine mutase (449 aa).

The active-site Phosphoserine intermediate is the Ser-105. Mg(2+) is bound by residues Ser-105, Asp-242, Asp-244, and Asp-246. Residue Ser-105 is modified to Phosphoserine.

The protein belongs to the phosphohexose mutase family. Mg(2+) serves as cofactor. In terms of processing, activated by phosphorylation.

The catalysed reaction is alpha-D-glucosamine 1-phosphate = D-glucosamine 6-phosphate. Functionally, catalyzes the conversion of glucosamine-6-phosphate to glucosamine-1-phosphate. This Clavibacter sepedonicus (Clavibacter michiganensis subsp. sepedonicus) protein is Phosphoglucosamine mutase.